The sequence spans 157 residues: Ribonuclease H (157 aa).

The RNase H type-1 domain occupies 5-146; the sequence is IMKQVEIFTD…CDDLARTAAE (142 aa). Residues Asp-14, Glu-52, Asp-74, and Asp-138 each contribute to the Mg(2+) site.

Belongs to the RNase H family. Monomer. Mg(2+) serves as cofactor.

The protein localises to the cytoplasm. The catalysed reaction is Endonucleolytic cleavage to 5'-phosphomonoester.. Endonuclease that specifically degrades the RNA of RNA-DNA hybrids. This is Ribonuclease H from Aliivibrio salmonicida (strain LFI1238) (Vibrio salmonicida (strain LFI1238)).